Here is a 216-residue protein sequence, read N- to C-terminus: Transmembrane emp24 domain-containing protein eca (216 aa).

The N-terminal stretch at 1–20 (MRDQWICLALVLCALHSACG) is a signal peptide. Over 21-183 (LYFHISETER…RHTSESTNSR (163 aa)) the chain is Lumenal. Positions 30-126 (RKCFIEEVPD…QLRVHLDIQV (97 aa)) constitute a GOLD domain. Residues 134 to 164 (ANVAQKEKLTELQLRIRQLLDQVEQITKEQN) adopt a coiled-coil conformation. Residues 184–203 (VLWWSLAQTVVLVCMGFWQM) form a helical membrane-spanning segment. Over 204–216 (RHLKSFFEAKKLV) the chain is Cytoplasmic. Positions 213-216 (KKLV) match the Prevents secretion from ER motif.

Belongs to the EMP24/GP25L family.

The protein resides in the endoplasmic reticulum membrane. Functionally, eca and bai are essential, though not redundant, for dorsoventral patterning of the embryo. Specifically required during early embryogenesis for the activity of maternal tkv, while the zygotic tkv is not affected. The sequence is that of Transmembrane emp24 domain-containing protein eca from Drosophila mojavensis (Fruit fly).